Reading from the N-terminus, the 282-residue chain is Pantothenate synthetase (282 aa).

30–37 (MGNLHQGH) serves as a coordination point for ATP. Histidine 37 serves as the catalytic Proton donor. (R)-pantoate is bound at residue glutamine 61. Glutamine 61 contacts beta-alanine. Position 149-152 (149-152 (GKKD)) interacts with ATP. Glutamine 155 is a binding site for (R)-pantoate. ATP-binding positions include isoleucine 178 and 186 to 189 (MSSR).

It belongs to the pantothenate synthetase family. In terms of assembly, homodimer.

It localises to the cytoplasm. It carries out the reaction (R)-pantoate + beta-alanine + ATP = (R)-pantothenate + AMP + diphosphate + H(+). It functions in the pathway cofactor biosynthesis; (R)-pantothenate biosynthesis; (R)-pantothenate from (R)-pantoate and beta-alanine: step 1/1. Its function is as follows. Catalyzes the condensation of pantoate with beta-alanine in an ATP-dependent reaction via a pantoyl-adenylate intermediate. This chain is Pantothenate synthetase, found in Shewanella loihica (strain ATCC BAA-1088 / PV-4).